Here is a 1162-residue protein sequence, read N- to C-terminus: Leptin receptor (1162 aa).

The N-terminal stretch at Met-1–Ala-21 is a signal peptide. Residues Leu-22–Gly-839 lie on the Extracellular side of the membrane. Cystine bridges form between Cys-37-Cys-90, Cys-89-Cys-99, Cys-131-Cys-142, Cys-186-Cys-195, and Cys-188-Cys-193. Asn-55, Asn-56, Asn-73, and Asn-98 each carry an N-linked (GlcNAc...) asparagine glycan. N-linked (GlcNAc...) asparagine glycosylation is present at Asn-187. The Fibronectin type-III 1 domain occupies Pro-238–Val-331. 3 N-linked (GlcNAc...) asparagine glycosylation sites follow: Asn-275, Asn-345, and Asn-356. Cystine bridges form between Cys-350–Cys-410 and Cys-411–Cys-416. N-linked (GlcNAc...) asparagine glycosylation occurs at Asn-431. 3 disulfide bridges follow: Cys-434-Cys-445, Cys-471-Cys-526, and Cys-486-Cys-496. The tract at residues His-465–Glu-482 is leptin-binding. N-linked (GlcNAc...) asparagine glycosylation is found at Asn-514, Asn-622, Asn-657, Asn-668, Asn-686, Asn-695, Asn-698, and Asn-726. Fibronectin type-III domains follow at residues Pro-537–Met-632, Pro-637–Phe-729, and Ala-738–Ile-831. The short motif at Trp-620–Ser-624 is the WSXWS motif element. The helical transmembrane segment at Leu-840–Ile-860 threads the bilayer. Residues Ser-861 to Val-1162 lie on the Cytoplasmic side of the membrane. A Box 1 motif motif is present at residues Phe-869 to Lys-877. Ser-880 bears the Phosphoserine mark. The interval Glu-891–Leu-896 is required for JAK2 activation. The required for STAT3 phosphorylation stretch occupies residues Leu-896 to Val-904. Tyr-985 carries the post-translational modification Phosphotyrosine; by JAK2. Tyr-1077 carries the phosphotyrosine modification. Position 1138 is a phosphotyrosine; by JAK2 (Tyr-1138).

This sequence belongs to the type I cytokine receptor family. Type 2 subfamily. In terms of assembly, present as a mixture of monomers and dimers. The phosphorylated receptor binds a number of SH2 domain-containing proteins such as JAK2, STAT3, PTPN11, and SOCS3. Interaction with SOCS3 inhibits JAK/STAT signaling and MAPK cascade. Post-translationally, on ligand binding, phosphorylated on two conserved C-terminal tyrosine residues (isoform B only) by JAK2. Tyr-985 is required for complete binding and activation of PTPN11, ERK/FOS activation,for interaction with SOCS3 and SOCS3 mediated inhibition of leptin signaling. Phosphorylation on Tyr-1138 is required for STAT3 binding/activation. Phosphorylation of Tyr-1077 has a more accessory role. In terms of tissue distribution, isoform B is expressed in kidney, liver, lung, ovary, spleen and uterus. Increased level in uterus during gestation. Isoform A and isoform C are predominantly expressed in cerebral microvessels and choroid plexus, with lower levels in cortex, cerebellum and hypothalamus but also liver and lung. Isoform F is expressed at high levels in brain, liver and spleen and less in stomach, kidney, thymus, heart, lung and hypothalamus.

It localises to the cell membrane. It is found in the basolateral cell membrane. Its subcellular location is the secreted. Receptor for hormone LEP/leptin. On ligand binding, mediates LEP central and peripheral effects through the activation of different signaling pathways such as JAK2/STAT3 and MAPK cascade/FOS. In the hypothalamus, LEP acts as an appetite-regulating factor that induces a decrease in food intake and an increase in energy consumption by inducing anorexinogenic factors and suppressing orexigenic neuropeptides, also regulates bone mass and secretion of hypothalamo-pituitary-adrenal hormones. In the periphery, increases basal metabolism, influences reproductive function, regulates pancreatic beta-cell function and insulin secretion, is pro-angiogenic and affects innate and adaptive immunity. Control of energy homeostasis and melanocortin production (stimulation of POMC and full repression of AgRP transcription) is mediated by STAT3 signaling, whereas distinct signals regulate NPY and the control of fertility, growth and glucose homeostasis. Involved in the regulation of counter-regulatory response to hypoglycemia by inhibiting neurons of the parabrachial nucleus. Has a specific effect on T lymphocyte responses, differentially regulating the proliferation of naive and memory T-cells. Leptin increases Th1 and suppresses Th2 cytokine production. In terms of biological role, may transport LEP across the blood-brain barrier. Binds LEP and mediates LEP endocytosis. Does not induce phosphorylation of and activate STAT3. Its function is as follows. Antagonizes Isoform A and isoform B-mediated LEP binding and endocytosis. This is Leptin receptor (Lepr) from Rattus norvegicus (Rat).